The sequence spans 305 residues: Superkiller complex protein 8 (305 aa).

At methionine 1 the chain carries N-acetylmethionine. At threonine 2 the chain carries N-acetylthreonine; in WD repeat-containing protein 61, N-terminally processed. WD repeat units follow at residues 14-57, 62-101, 104-143, 146-187, 188-227, 230-269, and 272-305; these read AHDD…LDLQ, GHQL…QIKS, AGPV…KEYS, TRGK…HTLE, GHAM…LAGT, GHAS…CVHT, and DHQD…DCPI.

This sequence belongs to the SKI8 family. In terms of assembly, component of the PAF1 complex, which consists of CDC73, PAF1, LEO1, CTR9, RTF1 and SKIC8. The PAF1 complex interacts with PHF5A. Within the PAF1 complex interacts directly with PHF5A. Component of the SKI complex which consists of SKIC2, SKIC3 and SKIC8.

It is found in the nucleus. Its subcellular location is the cytoplasm. Its function is as follows. Component of the PAF1 complex (PAF1C) which has multiple functions during transcription by RNA polymerase II and is implicated in regulation of development and maintenance of embryonic stem cell pluripotency. PAF1C associates with RNA polymerase II through interaction with POLR2A CTD non-phosphorylated and 'Ser-2'- and 'Ser-5'-phosphorylated forms and is involved in transcriptional elongation, acting both independently and synergistically with TCEA1 and in cooperation with the DSIF complex and HTATSF1. PAF1C is required for transcription of Hox and Wnt target genes. PAF1C is involved in hematopoiesis and stimulates transcriptional activity of KMT2A/MLL1; it promotes leukemogenesis through association with KMT2A/MLL1-rearranged oncoproteins, such as KMT2A/MLL1-MLLT3/AF9 and KMT2A/MLL1-MLLT1/ENL. PAF1C is involved in histone modifications such as ubiquitination of histone H2B and methylation on histone H3 'Lys-4' (H3K4me3). PAF1C recruits the RNF20/40 E3 ubiquitin-protein ligase complex and the E2 enzyme UBE2A or UBE2B to chromatin which mediate monoubiquitination of 'Lys-120' of histone H2B (H2BK120ub1); UB2A/B-mediated H2B ubiquitination is proposed to be coupled to transcription. PAF1C is involved in mRNA 3' end formation probably through association with cleavage and poly(A) factors. In case of infection by influenza A strain H3N2, PAF1C associates with viral NS1 protein, thereby regulating gene transcription. Required for mono- and trimethylation on histone H3 'Lys-4' (H3K4me3), dimethylation on histone H3 'Lys-79' (H3K4me3). Required for Hox gene transcription. Also acts as a component of the SKI complex, a multiprotein complex that assists the RNA-degrading exosome during the mRNA decay and quality-control pathways. The SKI complex catalyzes mRNA extraction from 80S ribosomal complexes in the 3'-5' direction and channels mRNA to the cytosolic exosome for degradation. SKI-mediated extraction of mRNA from stalled ribosomes allow binding of the Pelota-HBS1L complex and subsequent ribosome disassembly by ABCE1 for ribosome recycling. This chain is Superkiller complex protein 8, found in Homo sapiens (Human).